Consider the following 496-residue polypeptide: Cytochrome P450 71AV8 (496 aa).

Residues 3 to 23 form a helical membrane-spanning segment; sequence ISIPTTLGLAVIIFIIFKLLT. Cys432 provides a ligand contact to heme.

The protein belongs to the cytochrome P450 family. Heme serves as cofactor.

Its subcellular location is the membrane. Valencene oxidase, which preferentially hydroylates the C2 position of (+)-valencene in the trans-orientation, producing trans-nootkatol that can be further oxidized to (+)-nootkatone. Can also catalyze the three-step conversion of germacrene A to germacra-1(10),4,11(13)-trien-12-oic acid and the partial conversion of the non-natural substrate amorpha-4,11-diene into artemisinic alcohol and artemisinic aldehyde. The polypeptide is Cytochrome P450 71AV8 (CYP71AV8) (Cichorium intybus (Chicory)).